We begin with the raw amino-acid sequence, 247 residues long: uncharacterized protein (247 aa).

The protein localises to the mitochondrion. This is an uncharacterized protein from Schizosaccharomyces pombe (strain 972 / ATCC 24843) (Fission yeast).